Here is a 391-residue protein sequence, read N- to C-terminus: Oxygen-dependent coproporphyrinogen-III oxidase, chloroplastic (391 aa).

Residues 1–13 are compositionally biased toward polar residues; that stretch reads MASSLLTTPSQTL. The tract at residues 1-34 is disordered; it reads MASSLLTTPSQTLAPNPAAARARRSSPAAAQVSF. The span at 14-30 shows a compositional bias: low complexity; it reads APNPAAARARRSSPAAA. An important for dimerization region spans residues 125–134; it reads VLQDGNVFEK. Substrate is bound at residue Ser179. Residue His193 is the Proton donor of the active site. Residues 195 to 197 and 349 to 354 each bind substrate; these read NYR and GGRIES. The important for dimerization stretch occupies residues 331–366; it reads YVEFNLVYDRGTTFGLKTGGRIESILVSLPLTARWE.

This sequence belongs to the aerobic coproporphyrinogen-III oxidase family. Homodimer.

It is found in the plastid. The protein resides in the chloroplast. It carries out the reaction coproporphyrinogen III + O2 + 2 H(+) = protoporphyrinogen IX + 2 CO2 + 2 H2O. The protein operates within porphyrin-containing compound metabolism; protoporphyrin-IX biosynthesis; protoporphyrinogen-IX from coproporphyrinogen-III (O2 route): step 1/1. In terms of biological role, involved in the heme and chlorophyll biosynthesis. Catalyzes the aerobic oxidative decarboxylation of propionate groups of rings A and B of coproporphyrinogen-III to yield the vinyl groups in protoporphyrinogen-IX. The sequence is that of Oxygen-dependent coproporphyrinogen-III oxidase, chloroplastic (CPX) from Hordeum vulgare (Barley).